The sequence spans 270 residues: High choriolytic enzyme 1 (270 aa).

The first 20 residues, 1-20, serve as a signal peptide directing secretion; the sequence is MNLAPSTCLLLLFLLDIAQA. Residues 21–70 constitute a propeptide, activation peptide; that stretch reads LPVWDEEGHEEGHEEGDGDDFVDITTRILTSNNNTDQLLLEGDLVAPTNR. Residue N53 is glycosylated (N-linked (GlcNAc...) asparagine). Residues 71-270 form the Peptidase M12A domain; it reads NAMKCWSSSC…TRINVLYNCR (200 aa). Disulfide bonds link C75–C80, C120–C269, and C141–C161. H169 is a binding site for Zn(2+). E170 is a catalytic residue. Zn(2+) is bound by residues H173 and H179.

It depends on Zn(2+) as a cofactor.

It localises to the zymogen granule. It catalyses the reaction Hydrolysis of the inner layer of fish egg envelope. Also hydrolysis of casein and small molecule substrates such as succinyl-Leu-Leu-Val-Tyr-|-7-(4-methyl)coumarylamide.. In terms of biological role, participates in the breakdown of the egg envelope, which is derived from the egg extracellular matrix, at the time of hatching. Thus allowing the newly hatched fish to swim free. HCE binds tightly to the egg envelope while it exerts the choriolytic swelling action. The protein is High choriolytic enzyme 1 (hcea) of Oryzias latipes (Japanese rice fish).